The following is a 123-amino-acid chain: Small ribosomal subunit protein uS12 (123 aa).

Position 89 is a 3-methylthioaspartic acid (D89). Residues 101–123 (SLDTSGVKDRKQGRSKYGAKRPK) are disordered. Basic residues predominate over residues 113–123 (GRSKYGAKRPK).

The protein belongs to the universal ribosomal protein uS12 family. In terms of assembly, part of the 30S ribosomal subunit. Contacts proteins S8 and S17. May interact with IF1 in the 30S initiation complex.

Its function is as follows. With S4 and S5 plays an important role in translational accuracy. In terms of biological role, interacts with and stabilizes bases of the 16S rRNA that are involved in tRNA selection in the A site and with the mRNA backbone. Located at the interface of the 30S and 50S subunits, it traverses the body of the 30S subunit contacting proteins on the other side and probably holding the rRNA structure together. The combined cluster of proteins S8, S12 and S17 appears to hold together the shoulder and platform of the 30S subunit. In Azotobacter vinelandii (strain DJ / ATCC BAA-1303), this protein is Small ribosomal subunit protein uS12.